A 411-amino-acid polypeptide reads, in one-letter code: Peptidase T (411 aa).

A Zn(2+)-binding site is contributed by H79. Residue D81 is part of the active site. D142 lines the Zn(2+) pocket. The active-site Proton acceptor is the E176. Residues E177, D199, and H381 each contribute to the Zn(2+) site.

It belongs to the peptidase M20B family. Zn(2+) is required as a cofactor.

The protein resides in the cytoplasm. It carries out the reaction Release of the N-terminal residue from a tripeptide.. Functionally, cleaves the N-terminal amino acid of tripeptides. The protein is Peptidase T of Geobacillus thermodenitrificans (strain NG80-2).